Reading from the N-terminus, the 459-residue chain is MDQTVLDSAFNSPVDSGIAGTTTGSGSTTHFGVGTNFKVSVRSSSRSTDGTDSTDGANSDNVTGSTGSTPAHHSITNLNMALSQHSIDSATAASSTNPFPHFNQADLLNFHQNSLLPHHMFSQFGRYPQFEQKPDVGVLQQQMQMREAKPYKCTQCVKAFANSSYLSQHMRIHLGIKPFGPCNYCGKKFTQLSHLQQHIRTHTGEKPYKCKFTGCDKAFSQLSNLQSHSRCHQTDKPFKCNSCYKCFTDEQSLLDHIPKHKESKHLKIHICPFCGKSYTQQTYLQKHMTKHADRSKASNFGNDVVPADPFDPSLLSWNPMQGMGDNAHDSSSFNISSLTDQFAANTMIGSQSTNYNPAFQNSAFSQLFNIRNNRYLSEYPTSTKNGERAPGFNMITPLENIQRYNGSSSSATAVVTATGSAVVSSTPSSTSSSSAGSSSSQGGVFNPQSLINNMKNHSY.

The span at 1-14 (MDQTVLDSAFNSPV) shows a compositional bias: polar residues. The segment at 1-73 (MDQTVLDSAF…GSTGSTPAHH (73 aa)) is disordered. Low complexity predominate over residues 16 to 56 (SGIAGTTTGSGSTTHFGVGTNFKVSVRSSSRSTDGTDSTDG). Positions 57–73 (ANSDNVTGSTGSTPAHH) are enriched in polar residues. 5 consecutive C2H2-type zinc fingers follow at residues 151–173 (YKCT…MRIH), 180–202 (GPCN…IRTH), 208–232 (YKCK…SRCH), 238–260 (FKCN…IPKH), and 269–291 (HICP…MTKH). The segment at 390–406 (PGFNMITPLENIQRYNG) is interacts with mab-10. Residues 423 to 444 (VSSTPSSTSSSSAGSSSSQGGV) show a composition bias toward low complexity. Residues 423–459 (VSSTPSSTSSSSAGSSSSQGGVFNPQSLINNMKNHSY) form a disordered region. Residues 446–459 (NPQSLINNMKNHSY) are compositionally biased toward polar residues.

As to quaternary structure, interacts (via C-terminus) with transcription cofactor mab-10. As to expression, expressed in lateral hypodermal seam cells (at protein level).

The protein localises to the nucleus. In terms of biological role, transcription factor which regulates the expression of various genes, including those involved in cuticle synthesis and maintenance, such as collagens, and in lipid metabolism. Binds to promoter regions of genes, at 5'-[(T/G)TTTTTT(A/T/C/G)]-3' consensus sequences. Heterochronic protein which controls the choice of stage specific cell fates, including at the juvenile to adult transition. Promotes differentiation, together with transcriptional cofactor mab-10, perhaps as part of a transcriptional complex. Required for vulval morphogenesis and egg laying; perhaps by acting in a subset of the lateral seam cells. Involved in the exit of seam cells from the cell cycle. Required for specification of uterine pi-cell fate, acting upstream of lin-12 Notch signaling, perhaps via maintenance of lag-2 expression in the anchor cell (AC). Involved in morphogenesis of the specialized male tail used in mating. Acts cell non-autonomously from the hypodermis to regulate expression of genes in the intestine, including genes involved in lipid metabolism. May regulate vitellogenesis via the mTORC2 signaling mediated pathway, independently of daf-16. May promote nuclear accumulation of mab-10 in seam cells post-transcriptionally. Dispensable for seam cell fusion. Its function is as follows. Required for seam cell fusion. This is Zinc finger transcription factor lin-29 from Caenorhabditis elegans.